A 370-amino-acid polypeptide reads, in one-letter code: tRNA-specific 2-thiouridylase MnmA 1 (370 aa).

Residues G9–S16 and M35 each bind ATP. The interval N95–D97 is interaction with target base in tRNA. C100 acts as the Nucleophile in catalysis. Residues C100 and C196 are joined by a disulfide bond. G124 provides a ligand contact to ATP. The interaction with tRNA stretch occupies residues K146–Q148. C196 functions as the Cysteine persulfide intermediate in the catalytic mechanism. Positions R306–Y307 are interaction with tRNA.

The protein belongs to the MnmA/TRMU family.

The protein localises to the cytoplasm. It carries out the reaction S-sulfanyl-L-cysteinyl-[protein] + uridine(34) in tRNA + AH2 + ATP = 2-thiouridine(34) in tRNA + L-cysteinyl-[protein] + A + AMP + diphosphate + H(+). In terms of biological role, catalyzes the 2-thiolation of uridine at the wobble position (U34) of tRNA, leading to the formation of s(2)U34. This Geobacillus kaustophilus (strain HTA426) protein is tRNA-specific 2-thiouridylase MnmA 1.